The sequence spans 196 residues: ATP-dependent Clp protease proteolytic subunit (196 aa).

Ser96 functions as the Nucleophile in the catalytic mechanism. The active site involves His121.

Belongs to the peptidase S14 family. In terms of assembly, fourteen ClpP subunits assemble into 2 heptameric rings which stack back to back to give a disk-like structure with a central cavity, resembling the structure of eukaryotic proteasomes.

It is found in the cytoplasm. The enzyme catalyses Hydrolysis of proteins to small peptides in the presence of ATP and magnesium. alpha-casein is the usual test substrate. In the absence of ATP, only oligopeptides shorter than five residues are hydrolyzed (such as succinyl-Leu-Tyr-|-NHMec, and Leu-Tyr-Leu-|-Tyr-Trp, in which cleavage of the -Tyr-|-Leu- and -Tyr-|-Trp bonds also occurs).. Its function is as follows. Cleaves peptides in various proteins in a process that requires ATP hydrolysis. Has a chymotrypsin-like activity. Plays a major role in the degradation of misfolded proteins. The polypeptide is ATP-dependent Clp protease proteolytic subunit (Streptococcus thermophilus (strain CNRZ 1066)).